We begin with the raw amino-acid sequence, 217 residues long: Thymidylate kinase (217 aa).

7 to 14 (GIEGAGKS) is an ATP binding site.

Belongs to the thymidylate kinase family.

The catalysed reaction is dTMP + ATP = dTDP + ADP. Functionally, phosphorylation of dTMP to form dTDP in both de novo and salvage pathways of dTTP synthesis. The protein is Thymidylate kinase of Desulfovibrio desulfuricans (strain ATCC 27774 / DSM 6949 / MB).